The chain runs to 204 residues: Ribosomal RNA small subunit methyltransferase J (204 aa).

Residues 55 to 56 (RD), 71 to 72 (ER), and aspartate 123 contribute to the S-adenosyl-L-methionine site.

Belongs to the methyltransferase superfamily. RsmJ family.

It is found in the cytoplasm. The catalysed reaction is guanosine(1516) in 16S rRNA + S-adenosyl-L-methionine = N(2)-methylguanosine(1516) in 16S rRNA + S-adenosyl-L-homocysteine + H(+). Its function is as follows. Specifically methylates the guanosine in position 1516 of 16S rRNA. In Rhodopseudomonas palustris (strain ATCC BAA-98 / CGA009), this protein is Ribosomal RNA small subunit methyltransferase J.